We begin with the raw amino-acid sequence, 320 residues long: MTFRARHLLGIEHLAPDEIRSVLDLADSYVDLNRRTMKQSDALAGMTQINMFFENSTRTQSSFELAGKRLGADVMNMAVAQSSVKKGETLLDTAMTLNAMHPDLLVVRHPASGAVNLLASKVNCAVLNAGDGRHEHPTQALLDALTIRRAKGRIQRLTVAICGDIAHSRVARSNLILLGKMENRVRLIAPPTLMPPGVGEFGCELYDDMKKGLEGADVVMMLRLQKERMDGAFIPSEREYYHRFGLDAEKLAFAKEDAIVMHPGPMNRGVEIDGTLADDINRSVIQDQVEMGVAVRMACMDLLARNLRAERGRAAVGVMA.

Residues arginine 58 and threonine 59 each contribute to the carbamoyl phosphate site. Lysine 86 contacts L-aspartate. Residues arginine 108, histidine 136, and glutamine 139 each coordinate carbamoyl phosphate. 2 residues coordinate L-aspartate: arginine 169 and arginine 223. Glycine 264 and proline 265 together coordinate carbamoyl phosphate.

It belongs to the aspartate/ornithine carbamoyltransferase superfamily. ATCase family. As to quaternary structure, heterododecamer (2C3:3R2) of six catalytic PyrB chains organized as two trimers (C3), and six regulatory PyrI chains organized as three dimers (R2).

It catalyses the reaction carbamoyl phosphate + L-aspartate = N-carbamoyl-L-aspartate + phosphate + H(+). The protein operates within pyrimidine metabolism; UMP biosynthesis via de novo pathway; (S)-dihydroorotate from bicarbonate: step 2/3. Functionally, catalyzes the condensation of carbamoyl phosphate and aspartate to form carbamoyl aspartate and inorganic phosphate, the committed step in the de novo pyrimidine nucleotide biosynthesis pathway. The chain is Aspartate carbamoyltransferase catalytic subunit from Cereibacter sphaeroides (strain ATCC 17029 / ATH 2.4.9) (Rhodobacter sphaeroides).